Reading from the N-terminus, the 82-residue chain is Small ribosomal subunit protein bTHXm (82 aa).

Residues 1 to 22 (MAMRLAAAAAFVRRLVPARNPV) constitute a mitochondrion transit peptide. Positions 34–56 (RGDKKTKRGKRFKGSYGNARPKR) are disordered. A compositionally biased stretch (basic residues) spans 37 to 46 (KKTKRGKRFK).

This sequence belongs to the bacterial ribosomal protein bTHX family.

Its subcellular location is the mitochondrion. This is Small ribosomal subunit protein bTHXm from Oryza sativa subsp. japonica (Rice).